A 375-amino-acid polypeptide reads, in one-letter code: UDP-4-amino-4,6-dideoxy-N-acetyl-beta-L-altrosamine transaminase (375 aa).

Residues Y6, 26 to 29 (KQLT), A56, and S178 each bind substrate. K183 is modified (N6-(pyridoxal phosphate)lysine). Substrate contacts are provided by residues N228 and 313-316 (QVHY).

Belongs to the DegT/DnrJ/EryC1 family.

It catalyses the reaction UDP-4-amino-4,6-dideoxy-N-acetyl-beta-L-altrosamine + 2-oxoglutarate = UDP-2-acetamido-2,6-dideoxy-beta-L-arabino-hex-4-ulose + L-glutamate. Catalyzes the second step in the biosynthesis of pseudaminic acid, a sialic-acid-like sugar that is used to modify flagellin. Uses UDP-2-acetamido-2,6-dideoxy-beta-L-arabino-4-hexulose as substrate producing UDP-4-amino-4,6-dideoxy-beta-L-AltNAc. The protein is UDP-4-amino-4,6-dideoxy-N-acetyl-beta-L-altrosamine transaminase (pseC) of Helicobacter pylori (strain ATCC 700392 / 26695) (Campylobacter pylori).